The chain runs to 231 residues: GrpE protein homolog, mitochondrial (231 aa).

Residues S49 to K71 form a disordered region.

Belongs to the GrpE family. Component of the PAM complex, at least composed of mtHsp70, MGE1, TIM44, PAM16, PAM17 and PAM18.

Its subcellular location is the mitochondrion matrix. Functionally, essential component of the PAM complex, a complex required for the translocation of transit peptide-containing proteins from the inner membrane into the mitochondrial matrix in an ATP-dependent manner. Seems to control the nucleotide-dependent binding of SSC1 to substrate proteins. This Candida glabrata (strain ATCC 2001 / BCRC 20586 / JCM 3761 / NBRC 0622 / NRRL Y-65 / CBS 138) (Yeast) protein is GrpE protein homolog, mitochondrial (mge1).